The sequence spans 381 residues: Deoxyguanosinetriphosphate triphosphohydrolase-like protein (381 aa).

The 128-residue stretch at 76–203 folds into the HD domain; it reads RMTHTLEVAG…ADLSDEIAYT (128 aa).

This sequence belongs to the dGTPase family. Type 2 subfamily.

This chain is Deoxyguanosinetriphosphate triphosphohydrolase-like protein, found in Leptospira interrogans serogroup Icterohaemorrhagiae serovar copenhageni (strain Fiocruz L1-130).